The following is a 163-amino-acid chain: Protein-export protein SecB (163 aa).

Belongs to the SecB family. As to quaternary structure, homotetramer, a dimer of dimers. One homotetramer interacts with 1 SecA dimer.

The protein resides in the cytoplasm. Its function is as follows. One of the proteins required for the normal export of preproteins out of the cell cytoplasm. It is a molecular chaperone that binds to a subset of precursor proteins, maintaining them in a translocation-competent state. It also specifically binds to its receptor SecA. In Brucella abortus (strain S19), this protein is Protein-export protein SecB.